We begin with the raw amino-acid sequence, 522 residues long: DNA primase DnaG (522 aa).

The Toprim domain maps to 171 to 257 (DAIIILEGRA…CVEDLVQKEI (87 aa)). Positions 177, 219, and 221 each coordinate Mg(2+).

It belongs to the archaeal DnaG primase family. Forms a ternary complex with MCM helicase and DNA. Component of the archaeal exosome complex. The cofactor is Mg(2+).

The enzyme catalyses ssDNA + n NTP = ssDNA/pppN(pN)n-1 hybrid + (n-1) diphosphate.. Functionally, RNA polymerase that catalyzes the synthesis of short RNA molecules used as primers for DNA polymerase during DNA replication. Also part of the exosome, which is a complex involved in RNA degradation. Acts as a poly(A)-binding protein that enhances the interaction between heteromeric, adenine-rich transcripts and the exosome. This Methanosarcina mazei (strain ATCC BAA-159 / DSM 3647 / Goe1 / Go1 / JCM 11833 / OCM 88) (Methanosarcina frisia) protein is DNA primase DnaG.